The following is a 239-amino-acid chain: Probable plastid-lipid-associated protein 8, chloroplastic (239 aa).

The N-terminal 52 residues, 1 to 52, are a transit peptide targeting the chloroplast; the sequence is MAATASSLTIASSFSEPRTQIHSSRRLNLPLQYSIPYKVLRSRSRRLGLVVS. An N-acetylserine modification is found at serine 53.

It belongs to the PAP/fibrillin family.

It is found in the plastid. The protein localises to the chloroplast. This chain is Probable plastid-lipid-associated protein 8, chloroplastic (PAP8), found in Arabidopsis thaliana (Mouse-ear cress).